Reading from the N-terminus, the 1073-residue chain is uncharacterized protein (1073 aa).

The N-terminal stretch at 1–36 is a signal peptide; sequence MAEIIHHSNVFTWAFHVSEYDGAPLLLLGSFSSVAS. N-linked (GlcNAc...) asparagine glycosylation is present at Asn-132. Residue 392-399 coordinates ATP; sequence ATAGIGKS. 5 N-linked (GlcNAc...) asparagine glycosylation sites follow: Asn-544, Asn-632, Asn-703, Asn-732, and Asn-953.

This is an uncharacterized protein from Schizosaccharomyces pombe (strain 972 / ATCC 24843) (Fission yeast).